The sequence spans 242 residues: Biosynthetic peptidoglycan transglycosylase (242 aa).

Residues 12–32 (LLLWLIALSVLLVLLLRWVPP) traverse the membrane as a helical segment.

Belongs to the glycosyltransferase 51 family.

The protein resides in the cell inner membrane. It carries out the reaction [GlcNAc-(1-&gt;4)-Mur2Ac(oyl-L-Ala-gamma-D-Glu-L-Lys-D-Ala-D-Ala)](n)-di-trans,octa-cis-undecaprenyl diphosphate + beta-D-GlcNAc-(1-&gt;4)-Mur2Ac(oyl-L-Ala-gamma-D-Glu-L-Lys-D-Ala-D-Ala)-di-trans,octa-cis-undecaprenyl diphosphate = [GlcNAc-(1-&gt;4)-Mur2Ac(oyl-L-Ala-gamma-D-Glu-L-Lys-D-Ala-D-Ala)](n+1)-di-trans,octa-cis-undecaprenyl diphosphate + di-trans,octa-cis-undecaprenyl diphosphate + H(+). The protein operates within cell wall biogenesis; peptidoglycan biosynthesis. Functionally, peptidoglycan polymerase that catalyzes glycan chain elongation from lipid-linked precursors. The sequence is that of Biosynthetic peptidoglycan transglycosylase from Stutzerimonas stutzeri (strain A1501) (Pseudomonas stutzeri).